We begin with the raw amino-acid sequence, 311 residues long: Olfactory receptor 2M4 (311 aa).

Residues 1–25 (MVWENQTFNSIFILLGIFNHSPTHT) lie on the Extracellular side of the membrane. Asn5 is a glycosylation site (N-linked (GlcNAc...) asparagine). Residues 26-49 (FLFSLVLGIFSLALMENISMVLLI) traverse the membrane as a helical segment. Residues 50–57 (YIEKQLHT) are Cytoplasmic-facing. The helical transmembrane segment at 58-79 (PMYFLLSQLSLMDLMLICTTLP) threads the bilayer. At 80–100 (KMIFSYLSGKKSISLAGCGTQ) the chain is on the extracellular side. Cys97 and Cys189 are oxidised to a cystine. The chain crosses the membrane as a helical span at residues 101–120 (IFFYVSLLGAECFLLAVMAY). Over 121–139 (DRYVAICHPLQYTILMNPK) the chain is Cytoplasmic. The helical transmembrane segment at 140–158 (LCVFMTVASWTLGSLDGII) threads the bilayer. Over 159–195 (VLAAVLSFSYCSSLEIHHFFCDVAALLPLSCTETSAF) the chain is Extracellular. The chain crosses the membrane as a helical span at residues 196-219 (ERLLVICCVVMLIFPVSVIILSYS). At 220 to 236 (HVLRAVIHMGSGESRRK) the chain is on the cytoplasmic side. Residues 237-259 (AFTTCSSHLSVVGLYYGAAMFMY) traverse the membrane as a helical segment. The Extracellular portion of the chain corresponds to 260–272 (MRPASKHTPDQDK). Residues 273-292 (MVSAFYTILTPMLNPLIYSL) form a helical membrane-spanning segment. Residues 293 to 311 (RNKEVFRALQKVLKKRKLI) lie on the Cytoplasmic side of the membrane.

This sequence belongs to the G-protein coupled receptor 1 family.

It localises to the cell membrane. Its function is as follows. Odorant receptor. The protein is Olfactory receptor 2M4 (OR2M4) of Homo sapiens (Human).